Here is a 466-residue protein sequence, read N- to C-terminus: 23S rRNA (uracil(1939)-C(5))-methyltransferase RlmD (466 aa).

Positions 1-22 (MSSQPNPTSHPEAASAASAASN) are disordered. A TRAM domain is found at 17–81 (ASAASNDPVV…PSYEQAHLVE (65 aa)). Cys-94, Cys-100, Cys-103, and Cys-182 together coordinate [4Fe-4S] cluster. Residues Gln-290, Phe-319, Asn-324, Glu-340, Asn-368, and Asp-389 each coordinate S-adenosyl-L-methionine. The Nucleophile role is filled by Cys-422.

The protein belongs to the class I-like SAM-binding methyltransferase superfamily. RNA M5U methyltransferase family. RlmD subfamily.

The enzyme catalyses uridine(1939) in 23S rRNA + S-adenosyl-L-methionine = 5-methyluridine(1939) in 23S rRNA + S-adenosyl-L-homocysteine + H(+). Catalyzes the formation of 5-methyl-uridine at position 1939 (m5U1939) in 23S rRNA. The protein is 23S rRNA (uracil(1939)-C(5))-methyltransferase RlmD of Cupriavidus metallidurans (strain ATCC 43123 / DSM 2839 / NBRC 102507 / CH34) (Ralstonia metallidurans).